We begin with the raw amino-acid sequence, 371 residues long: Partitioning defective 6 homolog beta (371 aa).

Phosphoserine is present on residues serine 10 and serine 11. In terms of domain architecture, PB1 spans 16–96; it reads TMEVKSKFGA…PLLRIFIQKK (81 aa). Positions 126–253 are interaction with PARD3 and CDC42; that stretch reads RKKPHIVISM…ITVRPANQRN (128 aa). The 18-residue stretch at 133 to 150 folds into the Pseudo-CRIB domain; sequence ISMPQDFRPVSSIIDVDI. One can recognise a PDZ domain in the interval 157–250; it reads RVRLYKYGTE…NLIITVRPAN (94 aa). 2 disordered regions span residues 253–273 and 326–371; these read NNVVRNSRTSGSSSQSTDNSL and FESG…IITL. Polar residues predominate over residues 326-340; that stretch reads FESGQNGFSPPQDTS. Basic and acidic residues predominate over residues 352–363; sequence LESRAPDQKLLE.

It belongs to the PAR6 family. As to quaternary structure, interacts with PARD3. Interacts with GTP-bound forms of CDC42, RHOQ/TC10 and RAC1. Interacts with the N-terminal part of PRKCI and PRKCZ. Part of a complex with PARD3, CDC42 or RAC1 and PRKCI or PRKCZ. Part of a complex with LLGL1 and PRKCI. Interacts with ALS2CR19. Interacts with ECT2. Interacts with PALS1. As to expression, expressed in pancreas and in both adult and fetal kidney. Weakly expressed in placenta and lung. Not expressed in other tissues.

It is found in the cytoplasm. The protein localises to the cell membrane. Its subcellular location is the cell junction. It localises to the tight junction. In terms of biological role, adapter protein involved in asymmetrical cell division and cell polarization processes. Probably involved in formation of epithelial tight junctions. Association with PARD3 may prevent the interaction of PARD3 with F11R/JAM1, thereby preventing tight junction assembly. The PARD6-PARD3 complex links GTP-bound Rho small GTPases to atypical protein kinase C proteins. The protein is Partitioning defective 6 homolog beta (Pard6b) of Mus musculus (Mouse).